The sequence spans 159 residues: Ribonuclease H (159 aa).

The region spanning 1–142 (MHKQVEIFTD…CDELAKAAAQ (142 aa)) is the RNase H type-1 domain. The Mg(2+) site is built by D10, E48, D70, and D134. A disordered region spans residues 135–159 (ELAKAAAQSPTKEDTGYLESQQDKT). The span at 145–159 (TKEDTGYLESQQDKT) shows a compositional bias: basic and acidic residues.

It belongs to the RNase H family. In terms of assembly, monomer. The cofactor is Mg(2+).

Its subcellular location is the cytoplasm. The enzyme catalyses Endonucleolytic cleavage to 5'-phosphomonoester.. In terms of biological role, endonuclease that specifically degrades the RNA of RNA-DNA hybrids. The chain is Ribonuclease H from Proteus mirabilis (strain HI4320).